The sequence spans 107 residues: Large ribosomal subunit protein uL18c (107 aa).

This sequence belongs to the universal ribosomal protein uL18 family. In terms of assembly, part of the 50S ribosomal subunit; contacts the 5S rRNA.

Its subcellular location is the plastid. The protein localises to the chloroplast. In terms of biological role, binds 5S rRNA, forms part of the central protuberance of the 50S subunit. The sequence is that of Large ribosomal subunit protein uL18c (rpl18) from Guillardia theta (Cryptophyte).